Reading from the N-terminus, the 133-residue chain is Protein PsiE homolog (133 aa).

Transmembrane regions (helical) follow at residues 13-33 (LQWILNIALIILSIVLSIFLI), 55-75 (VESIIVYFLYFEFIALIIKYF), 81-101 (FPLRYFIYIGITALIRLIIVS), and 105-125 (PMETLLYAGAILILVIALYIS).

It belongs to the PsiE family.

The protein resides in the cell membrane. The protein is Protein PsiE homolog of Bacillus cereus (strain ATCC 10987 / NRS 248).